Here is a 710-residue protein sequence, read N- to C-terminus: Prolyl endopeptidase (710 aa).

The residue at position 1 (M1) is an N-acetylmethionine. K157 carries the N6-acetyllysine modification. Catalysis depends on charge relay system residues S554, D641, and H680.

Belongs to the peptidase S9A family. In terms of tissue distribution, expressed in all tissues tested: uterus, kidney, heart, lung, small intestine, smooth muscle, liver, spleen, thymus, adrenal, pituitary and whole brain.

The protein localises to the cytoplasm. It catalyses the reaction Hydrolysis of Pro-|-Xaa &gt;&gt; Ala-|-Xaa in oligopeptides.. Its activity is regulated as follows. Inhibited by DFP, Z-Pro-prolinal and poststatin, but not by PMSF, SBTI, EDTA, leupeptin, E-64 and pepstatin. Cleaves peptide bonds on the C-terminal side of prolyl residues within peptides that are up to approximately 30 amino acids long. Has high activity on the succinyl- (suc-) peptide-4-methylcoumaryl-7-amide (MCA) substrates suc-Gly-Pro-Leu-Gly-Pro-MCA, suc-Gly-Pro-MCA and suc-Ala-Ala-Ala-MCA. The chain is Prolyl endopeptidase from Rattus norvegicus (Rat).